We begin with the raw amino-acid sequence, 291 residues long: Small ribosomal subunit biogenesis GTPase RsgA (291 aa).

In terms of domain architecture, CP-type G spans 63–221 (ENELKRPPVS…IADTPGFSAL (159 aa)). GTP is bound by residues 112–115 (TKKD) and 164–172 (GQSGVGKST). Zn(2+) contacts are provided by cysteine 245, cysteine 250, histidine 252, and cysteine 258.

This sequence belongs to the TRAFAC class YlqF/YawG GTPase family. RsgA subfamily. Monomer. Associates with 30S ribosomal subunit, binds 16S rRNA. Zn(2+) serves as cofactor.

The protein resides in the cytoplasm. In terms of biological role, one of several proteins that assist in the late maturation steps of the functional core of the 30S ribosomal subunit. Helps release RbfA from mature subunits. May play a role in the assembly of ribosomal proteins into the subunit. Circularly permuted GTPase that catalyzes slow GTP hydrolysis, GTPase activity is stimulated by the 30S ribosomal subunit. The protein is Small ribosomal subunit biogenesis GTPase RsgA of Staphylococcus aureus (strain COL).